We begin with the raw amino-acid sequence, 233 residues long: Hydroxyacylglutathione hydrolase (233 aa).

Zn(2+) contacts are provided by histidine 52, histidine 54, aspartate 56, histidine 57, histidine 108, aspartate 125, and histidine 163.

It belongs to the metallo-beta-lactamase superfamily. Glyoxalase II family. As to quaternary structure, monomer. The cofactor is Zn(2+).

The catalysed reaction is an S-(2-hydroxyacyl)glutathione + H2O = a 2-hydroxy carboxylate + glutathione + H(+). It participates in secondary metabolite metabolism; methylglyoxal degradation; (R)-lactate from methylglyoxal: step 2/2. Thiolesterase that catalyzes the hydrolysis of S-D-lactoyl-glutathione to form glutathione and D-lactic acid. This Histophilus somni (strain 129Pt) (Haemophilus somnus) protein is Hydroxyacylglutathione hydrolase.